A 221-amino-acid chain; its full sequence is Thiamine-phosphate synthase (221 aa).

4-amino-2-methyl-5-(diphosphooxymethyl)pyrimidine is bound by residues 44–48 and asparagine 80; that span reads QLRLK. Residues aspartate 81 and aspartate 100 each coordinate Mg(2+). A 4-amino-2-methyl-5-(diphosphooxymethyl)pyrimidine-binding site is contributed by threonine 119. 2-[(2R,5Z)-2-carboxy-4-methylthiazol-5(2H)-ylidene]ethyl phosphate is bound at residue 146 to 148; that stretch reads TTT. 4-amino-2-methyl-5-(diphosphooxymethyl)pyrimidine is bound at residue lysine 149. Glycine 176 lines the 2-[(2R,5Z)-2-carboxy-4-methylthiazol-5(2H)-ylidene]ethyl phosphate pocket.

This sequence belongs to the thiamine-phosphate synthase family. Mg(2+) serves as cofactor.

It carries out the reaction 2-[(2R,5Z)-2-carboxy-4-methylthiazol-5(2H)-ylidene]ethyl phosphate + 4-amino-2-methyl-5-(diphosphooxymethyl)pyrimidine + 2 H(+) = thiamine phosphate + CO2 + diphosphate. The enzyme catalyses 2-(2-carboxy-4-methylthiazol-5-yl)ethyl phosphate + 4-amino-2-methyl-5-(diphosphooxymethyl)pyrimidine + 2 H(+) = thiamine phosphate + CO2 + diphosphate. It catalyses the reaction 4-methyl-5-(2-phosphooxyethyl)-thiazole + 4-amino-2-methyl-5-(diphosphooxymethyl)pyrimidine + H(+) = thiamine phosphate + diphosphate. It functions in the pathway cofactor biosynthesis; thiamine diphosphate biosynthesis; thiamine phosphate from 4-amino-2-methyl-5-diphosphomethylpyrimidine and 4-methyl-5-(2-phosphoethyl)-thiazole: step 1/1. Its function is as follows. Condenses 4-methyl-5-(beta-hydroxyethyl)thiazole monophosphate (THZ-P) and 2-methyl-4-amino-5-hydroxymethyl pyrimidine pyrophosphate (HMP-PP) to form thiamine monophosphate (TMP). This is Thiamine-phosphate synthase from Hyphomonas neptunium (strain ATCC 15444).